The chain runs to 78 residues: Omega-conotoxin-like SO-4 (78 aa).

A signal peptide spans 1–22 (MKLTCMVIVAVLLLTACQLITA). The propeptide occupies 23–42 (DDSRGTQKHRSLRSTTKVSK). Disulfide bonds link C46-C62, C53-C65, and C61-C72.

It belongs to the conotoxin O1 superfamily. In terms of tissue distribution, expressed by the venom duct.

It is found in the secreted. In terms of biological role, omega-conotoxins act at presynaptic membranes, they bind and block voltage-gated calcium channels (Cav). This is Omega-conotoxin-like SO-4 (SO4) from Conus striatus (Striated cone).